The following is a 141-amino-acid chain: MAKKIVAVIKLALQAGKANPAPPVGPALGQHGVNIMAFCKEYNARTQDKAGFVIPVEISVFEDRSFTFITKTPPASVLITKAAGIEKGSGESSKGSVGNISKSQLEEIAKTKLPDLNCTSIESAMKVIEGTARNMGISITE.

Belongs to the universal ribosomal protein uL11 family. As to quaternary structure, part of the ribosomal stalk of the 50S ribosomal subunit. Interacts with L10 and the large rRNA to form the base of the stalk. L10 forms an elongated spine to which L12 dimers bind in a sequential fashion forming a multimeric L10(L12)X complex. One or more lysine residues are methylated.

Forms part of the ribosomal stalk which helps the ribosome interact with GTP-bound translation factors. This Prochlorococcus marinus (strain MIT 9515) protein is Large ribosomal subunit protein uL11.